Reading from the N-terminus, the 79-residue chain is Cell division protein ZapB (79 aa).

Residues 6–78 (FEKLEVKVQQ…LRALLGKMEE (73 aa)) adopt a coiled-coil conformation.

Belongs to the ZapB family. Homodimer. The ends of the coiled-coil dimer bind to each other, forming polymers. Interacts with FtsZ.

It is found in the cytoplasm. Functionally, non-essential, abundant cell division factor that is required for proper Z-ring formation. It is recruited early to the divisome by direct interaction with FtsZ, stimulating Z-ring assembly and thereby promoting cell division earlier in the cell cycle. Its recruitment to the Z-ring requires functional FtsA or ZipA. The sequence is that of Cell division protein ZapB from Yersinia pseudotuberculosis serotype O:1b (strain IP 31758).